A 681-amino-acid chain; its full sequence is U3 small nucleolar ribonucleoprotein protein MPP10 (681 aa).

Phosphoserine occurs at positions 61, 120, and 140. A coiled-coil region spans residues 109 to 139 (ECEDEECEEDASEVEADNQENLETDLDEEQL). The span at 111–144 (EDEECEEDASEVEADNQENLETDLDEEQLSDEGG) shows a compositional bias: acidic residues. Disordered stretches follow at residues 111–202 (EDEE…SVVD), 215–256 (LEKV…GRQK), and 268–365 (YKDF…EKRQ). Residues 145 to 163 (DVPKGRDRAKSSRKSDPRK) show a composition bias toward basic and acidic residues. 3 positions are modified to phosphoserine: serine 164, serine 168, and serine 172. Over residues 215-227 (LEKVEKEEEKRPD) the composition is skewed to basic and acidic residues. Acidic residues-rich tracts occupy residues 228-248 (GEEEDEEDIDLFEDIDSDESE) and 273-322 (DPVE…EDEN). Serine 244, serine 247, serine 277, and serine 346 each carry phosphoserine. Residues 349–383 (AVKQESDEVKSSFEKRQEKMNEKIASLEKELLDKK) adopt a coiled-coil conformation. Residue lysine 351 forms a Glycyl lysine isopeptide (Lys-Gly) (interchain with G-Cter in SUMO2) linkage. The segment covering 352 to 365 (QESDEVKSSFEKRQ) has biased composition (basic and acidic residues). Glycyl lysine isopeptide (Lys-Gly) (interchain with G-Cter in SUMO2) cross-links involve residues lysine 383 and lysine 395. Residues 471 to 491 (AEIYEQEYLKLNQQKTEEEDN) adopt a coiled-coil conformation. Residue lysine 556 forms a Glycyl lysine isopeptide (Lys-Gly) (interchain with G-Cter in SUMO2) linkage. A compositionally biased stretch (basic and acidic residues) spans 560 to 576 (KAGDLKTAAEKTATDKK). The tract at residues 560–644 (KAGDLKTAAE…RKDKPLKSSQ (85 aa)) is disordered. Residues 575–604 (KKRERRKKKYQKRLKIKEKEKRKKLLEKNN) adopt a coiled-coil conformation. The span at 577–599 (RERRKKKYQKRLKIKEKEKRKKL) shows a compositional bias: basic residues. Residue lysine 609 is modified to N6-acetyllysine. The segment covering 630-640 (LLKDERKDKPL) has biased composition (basic and acidic residues). Glycyl lysine isopeptide (Lys-Gly) (interchain with G-Cter in SUMO2) cross-links involve residues lysine 632 and lysine 649. The tract at residues 657 to 681 (QINDAKQPEKIKKKKQDISVHKLKL) is disordered. Basic and acidic residues predominate over residues 662–681 (KQPEKIKKKKQDISVHKLKL).

The protein belongs to the MPP10 family. As to quaternary structure, part of the small subunit (SSU) processome, composed of more than 70 proteins and the RNA chaperone small nucleolar RNA (snoRNA) U3. Component of a heterotrimeric complex containing IMP3, IMP4 and MPHOSPH10. Interacts with IMP3 and IMP4. Post-translationally, phosphorylated in M (mitotic) phase.

It is found in the nucleus. Its subcellular location is the nucleolus. The protein localises to the chromosome. Its function is as follows. Component of the 60-80S U3 small nucleolar ribonucleoprotein (U3 snoRNP). Required for the early cleavages during pre-18S ribosomal RNA processing. Part of the small subunit (SSU) processome, first precursor of the small eukaryotic ribosomal subunit. During the assembly of the SSU processome in the nucleolus, many ribosome biogenesis factors, an RNA chaperone and ribosomal proteins associate with the nascent pre-rRNA and work in concert to generate RNA folding, modifications, rearrangements and cleavage as well as targeted degradation of pre-ribosomal RNA by the RNA exosome. This Mus musculus (Mouse) protein is U3 small nucleolar ribonucleoprotein protein MPP10 (Mphosph10).